The primary structure comprises 146 residues: DNA-binding protein Rv2175c (146 aa).

The disordered stretch occupies residues 1–27 (MPGRAPGSTLARVGSIPAGDDVLDPDE). The residue at position 9 (T9) is a Phosphothreonine.

In terms of assembly, monomer in solution. May form homodimers. Interacts with phosphorylated PknL. Post-translationally, phosphorylated by PknL. Phosphorylation negatively regulates DNA-binding activity.

In terms of biological role, binds DNA at low salt concentrations. The polypeptide is DNA-binding protein Rv2175c (Mycobacterium tuberculosis (strain ATCC 25618 / H37Rv)).